The chain runs to 84 residues: Beta-mammal/insect toxin Ts1 (84 aa).

The N-terminal stretch at Met1–Cys20 is a signal peptide. One can recognise an LCN-type CS-alpha/beta domain in the interval Lys21–Gly82. Intrachain disulfides connect Cys31–Cys81, Cys35–Cys57, Cys43–Cys62, and Cys47–Cys64. Cys81 carries the post-translational modification Cysteine amide.

Belongs to the long (4 C-C) scorpion toxin superfamily. Sodium channel inhibitor family. Post-translationally, C-terminal amidation is important for high activity. Expressed by the venom gland.

The protein resides in the secreted. Its function is as follows. Voltage-gated sodium channels (Nav) gating-modifier. Acts both as alpha- and beta-toxin, since it affects not only activation but also inactivation of Nav channels. Binds to Nav domain DII and impairs the four Nav channel voltage sensors movements. Depending on Nav channel subtypes tested, can also bind Nav domains DIII (low affinity) and DIV (very low affinity). Acts on almost all the Nav channels tested (mammalian Nav1.2/SCN2A, Nav1.3/SCN3A, Nav1.4/SCN4A, Nav1.5/SCN5A, Nav1.6/SCN8A, Nav1.9/SCN11A, and insect DmNav1). Is highly active against both mammals and insects. Irreversibly modulates DmNav channels. Other Ts1 activities have been studied, such as immunomodulation, antimicrobial activity or exocrine secretion. This toxin exhibits an antifungal activity against filamentous fungi. In vitro, it has an important immunomodulatory effect on macrophages by stimulating the release of pro-inflammatory cytokines. It also shows an activity in exocrine secretion in pancreas, stomach and adrenal gland. This chain is Beta-mammal/insect toxin Ts1, found in Tityus serrulatus (Brazilian scorpion).